Consider the following 56-residue polypeptide: MAKEKTTLPPTGAGLMRFFDEDTRAIKITPKGAVALTLILIIFEIILHVVGPRIFG.

Residues 1–29 lie on the Cytoplasmic side of the membrane; it reads MAKEKTTLPPTGAGLMRFFDEDTRAIKIT. The chain crosses the membrane as a helical span at residues 30-49; it reads PKGAVALTLILIIFEIILHV. Residues 50–56 lie on the Extracellular side of the membrane; that stretch reads VGPRIFG.

Belongs to the SEC61-beta family. As to quaternary structure, component of the protein translocase complex. Heterotrimer consisting of alpha (SecY), beta (SecG) and gamma (SecE) subunits. Can form oligomers of the heterotrimer.

The protein resides in the cell membrane. Involved in protein export. The function of the beta subunit is unknown, but it may be involved in stabilization of the trimeric complex. The chain is Preprotein translocase subunit SecG (secG) from Pyrococcus abyssi (strain GE5 / Orsay).